The following is a 254-amino-acid chain: Proteasome activator complex subunit 3 (254 aa).

N6-acetyllysine occurs at positions 6 and 14. At K195 the chain carries N6-acetyllysine; by P300/CBP.

In terms of assembly, homoheptamer. Post-translationally, acetylation at the major site Lys-195 is important for oligomerization and ability to degrade its target substrates. Deacetylated by SIRT1.

Implicated in immunoproteasome assembly and required for efficient antigen processing. The PA28 activator complex enhances the generation of class I binding peptides by altering the cleavage pattern of the proteasome. This is Proteasome activator complex subunit 3 from Gallus gallus (Chicken).